The chain runs to 326 residues: Neuferricin homolog (326 aa).

The first 34 residues, 1 to 34, serve as a signal peptide directing secretion; the sequence is MDKNRRRTDDAGLMTKTLAGIAALVFFLSFICSS. One can recognise a Cytochrome b5 heme-binding domain in the interval 98–197; it reads KHVFTPEQLH…KEYPLVGVVA (100 aa).

This sequence belongs to the cytochrome b5 family. MAPR subfamily.

The protein resides in the secreted. Functionally, heme-binding protein. The chain is Neuferricin homolog (tag-131) from Caenorhabditis elegans.